The sequence spans 62 residues: Translational regulator CsrA 3 (62 aa).

This sequence belongs to the CsrA/RsmA family. Homodimer; the beta-strands of each monomer intercalate to form a hydrophobic core, while the alpha-helices form wings that extend away from the core.

The protein localises to the cytoplasm. In terms of biological role, a key translational regulator that binds mRNA to regulate translation initiation and/or mRNA stability. Mediates global changes in gene expression, shifting from rapid growth to stress survival by linking envelope stress, the stringent response and the catabolite repression systems. Usually binds in the 5'-UTR; binding at or near the Shine-Dalgarno sequence prevents ribosome-binding, repressing translation, binding elsewhere in the 5'-UTR can activate translation and/or stabilize the mRNA. Its function is antagonized by small RNA(s). In Pseudomonas syringae pv. tomato (strain ATCC BAA-871 / DC3000), this protein is Translational regulator CsrA 3.